A 97-amino-acid polypeptide reads, in one-letter code: uncharacterized protein (97 aa).

The next 3 helical transmembrane spans lie at 5-25, 49-71, and 75-92; these read INYL…FVGI, IAGY…SFQG, and LIPP…IYVN.

The protein localises to the cell membrane. This is an uncharacterized protein from Bacillus subtilis (strain 168).